We begin with the raw amino-acid sequence, 633 residues long: Phosphomethylpyrimidine synthase (633 aa).

Residues asparagine 245, methionine 274, tyrosine 303, histidine 339, serine 359–glycine 361, aspartate 400–arginine 403, and glutamate 439 each bind substrate. Histidine 443 provides a ligand contact to Zn(2+). Tyrosine 466 contributes to the substrate binding site. Histidine 507 lines the Zn(2+) pocket. Residues cysteine 587, cysteine 590, and cysteine 595 each contribute to the [4Fe-4S] cluster site.

It belongs to the ThiC family. Homodimer. [4Fe-4S] cluster is required as a cofactor.

It catalyses the reaction 5-amino-1-(5-phospho-beta-D-ribosyl)imidazole + S-adenosyl-L-methionine = 4-amino-2-methyl-5-(phosphooxymethyl)pyrimidine + CO + 5'-deoxyadenosine + formate + L-methionine + 3 H(+). It functions in the pathway cofactor biosynthesis; thiamine diphosphate biosynthesis. Functionally, catalyzes the synthesis of the hydroxymethylpyrimidine phosphate (HMP-P) moiety of thiamine from aminoimidazole ribotide (AIR) in a radical S-adenosyl-L-methionine (SAM)-dependent reaction. This Neisseria meningitidis serogroup C / serotype 2a (strain ATCC 700532 / DSM 15464 / FAM18) protein is Phosphomethylpyrimidine synthase.